The sequence spans 151 residues: MHALQAKILDPRLGTEFPLPQYATPGSAGLDLRALLKEDTVLEPGQTLLIPTGLSVYIGDPGLAAMILPRSGLGHKHGVVLGNLVGLIDSDYQGELMVSCWNRGNTPFTITIGERIAQLILVPVVQAHFDIVEQFDETQRGTGGFGHSGTR.

Substrate contacts are provided by residues 70–72 (RSG), asparagine 83, 87–89 (LID), and methionine 97.

This sequence belongs to the dUTPase family. Requires Mg(2+) as cofactor.

The enzyme catalyses dUTP + H2O = dUMP + diphosphate + H(+). The protein operates within pyrimidine metabolism; dUMP biosynthesis; dUMP from dCTP (dUTP route): step 2/2. Functionally, this enzyme is involved in nucleotide metabolism: it produces dUMP, the immediate precursor of thymidine nucleotides and it decreases the intracellular concentration of dUTP so that uracil cannot be incorporated into DNA. The sequence is that of Deoxyuridine 5'-triphosphate nucleotidohydrolase from Pseudomonas entomophila (strain L48).